We begin with the raw amino-acid sequence, 89 residues long: Small ribosomal subunit protein uS15 (89 aa).

Belongs to the universal ribosomal protein uS15 family. In terms of assembly, part of the 30S ribosomal subunit. Forms a bridge to the 50S subunit in the 70S ribosome, contacting the 23S rRNA.

Its function is as follows. One of the primary rRNA binding proteins, it binds directly to 16S rRNA where it helps nucleate assembly of the platform of the 30S subunit by binding and bridging several RNA helices of the 16S rRNA. In terms of biological role, forms an intersubunit bridge (bridge B4) with the 23S rRNA of the 50S subunit in the ribosome. This is Small ribosomal subunit protein uS15 from Bacillus anthracis (strain CDC 684 / NRRL 3495).